The sequence spans 246 residues: Small ribosomal subunit protein uS3 (246 aa).

The KH type-2 domain occupies 38–106 (IRQYLNARLA…DVQINIYEIR (69 aa)). Positions 218–246 (VAKNQSRRPNAQGGNNRGGDRNRRRKGNR) are disordered.

Belongs to the universal ribosomal protein uS3 family. As to quaternary structure, part of the 30S ribosomal subunit. Forms a tight complex with proteins S10 and S14.

In terms of biological role, binds the lower part of the 30S subunit head. Binds mRNA in the 70S ribosome, positioning it for translation. The chain is Small ribosomal subunit protein uS3 from Porphyromonas gingivalis (strain ATCC 33277 / DSM 20709 / CIP 103683 / JCM 12257 / NCTC 11834 / 2561).